The following is a 399-amino-acid chain: MNGNEFGRLFRMTTYGESHGEAMGCTVSGVPAGVELSEEEIQKDLDRRKPGQSMITTSRGEPDKVTINSGIQDGYTTGTPIGMVIQNKDARSGKYEPFITAPRPSHGDYTYSAKFGTRNWGGGGRSSARETVNWVAAGGVAKQVLEQSDYDVQIKAHVCQIGDVEAGPVTFEDMLEHSEENEVRCADPEAAEEMRDVADQHQKEGDSIGGAIYFECRGVPSGLGAPRFDSFPSRLGQAMYSIPAVNDFEYGIGREARTTKGSEYTENWEFDEDGHPTPVGNDHGGIQGGITTGQPIYGEVSWHAPVSIPKTQETVDWETGEGKEITVTGRHDPVLPPRAVPVVEAMLACTVLDFMLLGGRINPDRLDGRPGEYDTDYHPSSPQNDPEDADTHAKTIDDD.

The interval 41-72 (IQKDLDRRKPGQSMITTSRGEPDKVTINSGIQ) is disordered. Arg-48 contacts NADP(+). Residues 125–127 (RSS), Gly-288, 303–307 (HAPVS), and Arg-330 each bind FMN. Basic and acidic residues-rich tracts occupy residues 363–377 (PDRL…DTDY) and 389–399 (ADTHAKTIDDD). The tract at residues 363–399 (PDRLDGRPGEYDTDYHPSSPQNDPEDADTHAKTIDDD) is disordered.

It belongs to the chorismate synthase family. It depends on FMNH2 as a cofactor.

It catalyses the reaction 5-O-(1-carboxyvinyl)-3-phosphoshikimate = chorismate + phosphate. The protein operates within metabolic intermediate biosynthesis; chorismate biosynthesis; chorismate from D-erythrose 4-phosphate and phosphoenolpyruvate: step 7/7. Its function is as follows. Catalyzes the anti-1,4-elimination of the C-3 phosphate and the C-6 proR hydrogen from 5-enolpyruvylshikimate-3-phosphate (EPSP) to yield chorismate, which is the branch point compound that serves as the starting substrate for the three terminal pathways of aromatic amino acid biosynthesis. This reaction introduces a second double bond into the aromatic ring system. The sequence is that of Chorismate synthase from Haloarcula marismortui (strain ATCC 43049 / DSM 3752 / JCM 8966 / VKM B-1809) (Halobacterium marismortui).